A 309-amino-acid chain; its full sequence is Dihydroorotate dehydrogenase B (NAD(+)), catalytic subunit (309 aa).

FMN is bound by residues serine 21 and 45-46; that span reads KA. Substrate-binding positions include lysine 45 and 69–73; that span reads NAIGL. Residues asparagine 99 and asparagine 127 each coordinate FMN. Asparagine 127 contributes to the substrate binding site. The Nucleophile role is filled by cysteine 130. The FMN site is built by lysine 165 and isoleucine 191. 192–193 contributes to the substrate binding site; that stretch reads NT. Residues glycine 217, 243-244, and 265-266 contribute to the FMN site; these read GG and GT.

The protein belongs to the dihydroorotate dehydrogenase family. Type 1 subfamily. In terms of assembly, heterotetramer of 2 PyrK and 2 PyrD type B subunits. FMN is required as a cofactor.

The protein localises to the cytoplasm. It carries out the reaction (S)-dihydroorotate + NAD(+) = orotate + NADH + H(+). Its pathway is pyrimidine metabolism; UMP biosynthesis via de novo pathway; orotate from (S)-dihydroorotate (NAD(+) route): step 1/1. Catalyzes the conversion of dihydroorotate to orotate with NAD(+) as electron acceptor. The chain is Dihydroorotate dehydrogenase B (NAD(+)), catalytic subunit (pyrD) from Exiguobacterium sibiricum (strain DSM 17290 / CCUG 55495 / CIP 109462 / JCM 13490 / 255-15).